Here is a 350-residue protein sequence, read N- to C-terminus: Methionine aminopeptidase 1D, chloroplastic/mitochondrial (350 aa).

Residues 1–49 (MAGVKSLQPRLISSFLGNNSIRSTQPLIHLFRFDLGRRHVSMQLSRTFS) constitute a chloroplast and mitochondrion transit peptide. Residue glycine 50 is modified to N-acetylglycine. Residues 71-90 (RLRPGNVSPRRPVPGHITKP) form a disordered region. Histidine 180 contributes to the substrate binding site. Positions 197, 208, and 271 each coordinate a divalent metal cation. Histidine 278 contributes to the substrate binding site. Glutamate 303 and glutamate 334 together coordinate a divalent metal cation.

This sequence belongs to the peptidase M24A family. Methionine aminopeptidase type 1 subfamily. Co(2+) is required as a cofactor. It depends on Zn(2+) as a cofactor. The cofactor is Mn(2+). Fe(2+) serves as cofactor. In terms of tissue distribution, ubiquitous. Preferentially expressed in green tissues.

The protein localises to the plastid. It is found in the chloroplast. Its subcellular location is the mitochondrion. The enzyme catalyses Release of N-terminal amino acids, preferentially methionine, from peptides and arylamides.. Functionally, removes the N-terminal methionine from nascent proteins. The N-terminal methionine is often cleaved when the second residue in the primary sequence is small and uncharged (Met-Ala-, Cys, Gly, Pro, Ser, Thr, or Val). The polypeptide is Methionine aminopeptidase 1D, chloroplastic/mitochondrial (MAP1D) (Arabidopsis thaliana (Mouse-ear cress)).